A 322-amino-acid polypeptide reads, in one-letter code: 4-hydroxythreonine-4-phosphate dehydrogenase (322 aa).

A substrate-binding site is contributed by Thr132. A divalent metal cation is bound by residues His160, His205, and His260. Substrate contacts are provided by Lys268, Asn277, and Arg286.

Belongs to the PdxA family. In terms of assembly, homodimer. The cofactor is Zn(2+). Mg(2+) is required as a cofactor. Requires Co(2+) as cofactor.

Its subcellular location is the cytoplasm. It carries out the reaction 4-(phosphooxy)-L-threonine + NAD(+) = 3-amino-2-oxopropyl phosphate + CO2 + NADH. It functions in the pathway cofactor biosynthesis; pyridoxine 5'-phosphate biosynthesis; pyridoxine 5'-phosphate from D-erythrose 4-phosphate: step 4/5. Functionally, catalyzes the NAD(P)-dependent oxidation of 4-(phosphooxy)-L-threonine (HTP) into 2-amino-3-oxo-4-(phosphooxy)butyric acid which spontaneously decarboxylates to form 3-amino-2-oxopropyl phosphate (AHAP). The protein is 4-hydroxythreonine-4-phosphate dehydrogenase of Xanthomonas campestris pv. campestris (strain 8004).